A 247-amino-acid chain; its full sequence is 2,3-bisphosphoglycerate-dependent phosphoglycerate mutase (247 aa).

Substrate-binding positions include 8-15 (RHGQSLWN), 21-22 (TG), Arg-60, 87-90 (ERHY), Lys-98, 114-115 (RR), and 183-184 (GN). His-9 acts as the Tele-phosphohistidine intermediate in catalysis. The active-site Proton donor/acceptor is the Glu-87.

The protein belongs to the phosphoglycerate mutase family. BPG-dependent PGAM subfamily.

The catalysed reaction is (2R)-2-phosphoglycerate = (2R)-3-phosphoglycerate. It participates in carbohydrate degradation; glycolysis; pyruvate from D-glyceraldehyde 3-phosphate: step 3/5. Its function is as follows. Catalyzes the interconversion of 2-phosphoglycerate and 3-phosphoglycerate. The sequence is that of 2,3-bisphosphoglycerate-dependent phosphoglycerate mutase from Hydrogenobaculum sp. (strain Y04AAS1).